A 176-amino-acid polypeptide reads, in one-letter code: ATP-dependent protease subunit HslV (176 aa).

Residue threonine 5 is part of the active site. Na(+)-binding residues include alanine 161, cysteine 164, and threonine 167.

Belongs to the peptidase T1B family. HslV subfamily. As to quaternary structure, a double ring-shaped homohexamer of HslV is capped on each side by a ring-shaped HslU homohexamer. The assembly of the HslU/HslV complex is dependent on binding of ATP.

Its subcellular location is the cytoplasm. The enzyme catalyses ATP-dependent cleavage of peptide bonds with broad specificity.. With respect to regulation, allosterically activated by HslU binding. Its function is as follows. Protease subunit of a proteasome-like degradation complex believed to be a general protein degrading machinery. The polypeptide is ATP-dependent protease subunit HslV (Desulforamulus reducens (strain ATCC BAA-1160 / DSM 100696 / MI-1) (Desulfotomaculum reducens)).